A 490-amino-acid polypeptide reads, in one-letter code: Hydroxysteroid dehydrogenase-like protein 2 (490 aa).

NADP(+)-binding positions include 17 to 23, Lys42, and Asp74; that span reads GASRGIG. Position 42 is an N6-(2-hydroxyisobutyryl)lysine (Lys42). Lys116 bears the N6-acetyllysine mark. The active-site Proton acceptor is the Tyr168. Lys172 serves as a coordination point for NADP(+). Positions 282–301 are enriched in basic and acidic residues; the sequence is MEEKESNDSVPEVKEEKLQL. The segment at 282-370 is disordered; sequence MEEKESNDSV…PRQQPQPFVQ (89 aa). The segment covering 302–367 has biased composition (low complexity); sequence QEESQLQKQP…QPRPRQQPQP (66 aa). An SCP2 domain is found at 380-487; that stretch reads GAVEETFRIV…KLEKLMTQMN (108 aa). Lys390 carries the N6-succinyllysine modification.

The protein belongs to the short-chain dehydrogenases/reductases (SDR) family. As to expression, widely expressed.

It localises to the peroxisome. It is found in the mitochondrion. In terms of biological role, has apparently no steroid dehydrogenase activity. Controls bile acid (BA) and lipid metabolism in response to nutritional cues. The polypeptide is Hydroxysteroid dehydrogenase-like protein 2 (Hsdl2) (Mus musculus (Mouse)).